A 906-amino-acid chain; its full sequence is ATP-dependent DNA helicase DDX11 (906 aa).

Positions Gly-9–Leu-442 constitute a Helicase ATP-binding domain. Position 44-51 (Ser-44–Ser-51) interacts with ATP. The interval Ala-78 to Asp-111 is disordered. The segment covering Ser-85–Ser-96 has biased composition (low complexity). Residue Ser-260 is modified to Phosphoserine. Positions 265 and 283 each coordinate [4Fe-4S] cluster. Basic and acidic residues predominate over residues Val-284–Pro-301. Residues Val-284–Thr-310 are disordered. [4Fe-4S] cluster is bound by residues Cys-312 and Cys-347. A DEAH box motif is present at residues Asp-390–His-393.

This sequence belongs to the DEAD box helicase family. DEAH subfamily. DDX11/CHL1 sub-subfamily. Associates with the CTF18-RFC complex. Associates with a cohesin complex composed of RAD21, SMC1 proteins and SMC3. Interacts with CHTF18. Interacts with DSCC1. Interacts with FEN1; this interaction is direct and increases flap endonuclease activity of FEN1. Interacts with PCNA. Interacts with POLR1A and UBTF. Interacts with RAD21, SMC1 proteins and SMC3. Interacts with RFC2. Interacts with TIMELESS; this interaction increases recruitment of both proteins onto chromatin in response to replication stress induction by hydroxyurea. It depends on [4Fe-4S] cluster as a cofactor.

It is found in the nucleus. Its subcellular location is the nucleolus. The protein resides in the cytoplasm. The protein localises to the cytoskeleton. It localises to the spindle pole. It is found in the midbody. Its subcellular location is the microtubule organizing center. The protein resides in the centrosome. It catalyses the reaction Couples ATP hydrolysis with the unwinding of duplex DNA at the replication fork by translocating in the 5'-3' direction. This creates two antiparallel DNA single strands (ssDNA). The leading ssDNA polymer is the template for DNA polymerase III holoenzyme which synthesizes a continuous strand.. The enzyme catalyses ATP + H2O = ADP + phosphate + H(+). Functionally, DNA-dependent ATPase and ATP-dependent DNA helicase that participates in various functions in genomic stability, including DNA replication, DNA repair and heterochromatin organization as well as in ribosomal RNA synthesis. Its double-stranded DNA helicase activity requires either a minimal 5'-single-stranded tail length of approximately 15 nt (flap substrates) or 10 nt length single-stranded gapped DNA substrates of a partial duplex DNA structure for helicase loading and translocation along DNA in a 5' to 3' direction. The helicase activity is capable of displacing duplex regions up to 100 bp, which can be extended up to 500 bp by the replication protein A (RPA) or the cohesion CTF18-replication factor C (Ctf18-RFC) complex activities. Also shows ATPase- and helicase activities on substrates that mimic key DNA intermediates of replication, repair and homologous recombination reactions, including forked duplex, anti-parallel G-quadruplex and three-stranded D-loop DNA molecules. Plays a role in DNA double-strand break (DSB) repair at the DNA replication fork during DNA replication recovery from DNA damage. Recruited with TIMELESS factor upon DNA-replication stress response at DNA replication fork to preserve replication fork progression, and hence ensure DNA replication fidelity. Also cooperates with TIMELESS factor during DNA replication to regulate proper sister chromatid cohesion and mitotic chromosome segregation. Stimulates 5'-single-stranded DNA flap endonuclease activity of FEN1 in an ATP- and helicase-independent manner; and hence it may contribute in Okazaki fragment processing at DNA replication fork during lagging strand DNA synthesis. Its ability to function at DNA replication fork is modulated by its binding to long non-coding RNA (lncRNA) cohesion regulator non-coding RNA DDX11-AS1/CONCR, which is able to increase both DDX11 ATPase activity and binding to DNA replicating regions. Also plays a role in heterochromatin organization. Involved in rRNA transcription activation through binding to active hypomethylated rDNA gene loci by recruiting UBTF and the RNA polymerase Pol I transcriptional machinery. Plays a role in embryonic development and prevention of aneuploidy. Involved in melanoma cell proliferation and survival. Associates with chromatin at DNA replication fork regions. Binds to single- and double-stranded DNAs. The polypeptide is ATP-dependent DNA helicase DDX11 (Mus musculus (Mouse)).